A 239-amino-acid polypeptide reads, in one-letter code: RNA polymerase sigma-E factor (239 aa).

Residues 1-29 (MKKLKLRLTHLWYKLLMKLGLKSDEVYYI) constitute a propeptide, removed by SpoIIGA. The Polymerase core binding signature appears at 86–99 (DLISIGTIGLIKAV). The H-T-H motif DNA-binding region spans 206–225 (QKDVADMMGISQSYISRLEK).

This sequence belongs to the sigma-70 factor family. Proteolytically cleaved in the N-terminus by SpoIIGA to yield the active peptide.

In terms of biological role, sigma factors are initiation factors that promote the attachment of RNA polymerase to specific initiation sites and are then released. This sigma factor is responsible for the expression of sporulation specific genes. This chain is RNA polymerase sigma-E factor (sigE), found in Bacillus subtilis (strain 168).